A 58-amino-acid chain; its full sequence is Large ribosomal subunit protein uL30 (58 aa).

Belongs to the universal ribosomal protein uL30 family. Part of the 50S ribosomal subunit.

This is Large ribosomal subunit protein uL30 from Wigglesworthia glossinidia brevipalpis.